We begin with the raw amino-acid sequence, 531 residues long: Berberine bridge enzyme-like 9 (531 aa).

Positions 1–23 (MTSLTTQTLIITIFLLTIPTSFA) are cleaved as a signal peptide. Cysteines 35 and 99 form a disulfide. 7 N-linked (GlcNAc...) asparagine glycosylation sites follow: Asn76, Asn164, Asn271, Asn300, Asn314, Asn400, and Asn485. Residues 77 to 252 (MTRKPVAIVA…LAWKIKLVPV (176 aa)) enclose the FAD-binding PCMH-type domain. The segment at residues 114–177 (HDYDGMSYLS…DLRGFPAGIC (64 aa)) is a cross-link (6-(S-cysteinyl)-8alpha-(pros-histidyl)-FAD (His-Cys)).

The protein belongs to the oxygen-dependent FAD-linked oxidoreductase family. FAD serves as cofactor. The FAD cofactor is bound via a bicovalent 6-S-cysteinyl, 8alpha-N1-histidyl FAD linkage. In terms of tissue distribution, accumulates in cell walls of etiolated hypocotyls.

Its subcellular location is the secreted. The protein localises to the cell wall. The chain is Berberine bridge enzyme-like 9 from Arabidopsis thaliana (Mouse-ear cress).